Reading from the N-terminus, the 540-residue chain is Phenylalanine--tRNA ligase beta subunit (540 aa).

Residues 270 to 347 enclose the B5 domain; it reads MTPRTLNVPR…IGYGFDKIKS (78 aa). Mg(2+) is bound by residues D325, D331, E334, and D335.

The protein belongs to the phenylalanyl-tRNA synthetase beta subunit family. Type 2 subfamily. Tetramer of two alpha and two beta subunits. Mg(2+) is required as a cofactor.

The protein localises to the cytoplasm. It carries out the reaction tRNA(Phe) + L-phenylalanine + ATP = L-phenylalanyl-tRNA(Phe) + AMP + diphosphate + H(+). In Methanococcoides burtonii (strain DSM 6242 / NBRC 107633 / OCM 468 / ACE-M), this protein is Phenylalanine--tRNA ligase beta subunit.